Here is a 205-residue protein sequence, read N- to C-terminus: Holliday junction branch migration complex subunit RuvA (205 aa).

Positions 1-64 (MIGKLKGTID…EDQLKLFGFM (64 aa)) are domain I. Positions 65 to 143 (SALEREWFNL…AFTGDAGSAI (79 aa)) are domain II. Positions 144–153 (GLKQELGEGV) are flexible linker. Residues 153–205 (VASAPVSDAVSALTNLGYSRDQAANAIAAALKNGGEGADSAKLIRLGLKELSR) form a domain III region.

It belongs to the RuvA family. As to quaternary structure, homotetramer. Forms an RuvA(8)-RuvB(12)-Holliday junction (HJ) complex. HJ DNA is sandwiched between 2 RuvA tetramers; dsDNA enters through RuvA and exits via RuvB. An RuvB hexamer assembles on each DNA strand where it exits the tetramer. Each RuvB hexamer is contacted by two RuvA subunits (via domain III) on 2 adjacent RuvB subunits; this complex drives branch migration. In the full resolvosome a probable DNA-RuvA(4)-RuvB(12)-RuvC(2) complex forms which resolves the HJ.

It is found in the cytoplasm. Its function is as follows. The RuvA-RuvB-RuvC complex processes Holliday junction (HJ) DNA during genetic recombination and DNA repair, while the RuvA-RuvB complex plays an important role in the rescue of blocked DNA replication forks via replication fork reversal (RFR). RuvA specifically binds to HJ cruciform DNA, conferring on it an open structure. The RuvB hexamer acts as an ATP-dependent pump, pulling dsDNA into and through the RuvAB complex. HJ branch migration allows RuvC to scan DNA until it finds its consensus sequence, where it cleaves and resolves the cruciform DNA. The polypeptide is Holliday junction branch migration complex subunit RuvA (Allorhizobium ampelinum (strain ATCC BAA-846 / DSM 112012 / S4) (Agrobacterium vitis (strain S4))).